We begin with the raw amino-acid sequence, 110 residues long: Evasin P1166 (110 aa).

Residues 1–24 form the signal peptide; the sequence is MEVKIFTLLQIALFIALGIHLVVA. 3 disulfides stabilise this stretch: Cys-45-Cys-67, Cys-49-Cys-69, and Cys-60-Cys-80. N-linked (GlcNAc...) asparagine glycosylation occurs at Asn-48. The disordered stretch occupies residues 89 to 110; sequence SEYPNPKSSEIDAAAPLPRETH.

It is found in the secreted. Salivary chemokine-binding protein which binds to host chemokines CXCL1, CXCL2 and CXCL8. This is Evasin P1166 from Ixodes ricinus (Common tick).